We begin with the raw amino-acid sequence, 878 residues long: Pyruvate, phosphate dikinase (878 aa).

The tract at residues 1-347 is N-terminal; that stretch reads MKKLIYYFGS…LYILQTRTAK (347 aa). Residue arginine 96 participates in ATP binding. The segment at 348-404 is linker 1; that stretch reads RTAIAAINIAVQMVEEKLISKEQALMRIDPESLNQLLHTRIDYSKGLTSIAEGLPAS. Residues 405–502 form a central region; it reads PGAATGIAVF…VIKQGDIITI (98 aa). Position 457 is a phosphothreonine; by PDRP1 (threonine 457). The Tele-phosphohistidine intermediate role is filled by histidine 459. The segment at 503–537 is linker 2; that stretch reads DGGSGKIFLGEMPLIQPTFSEESKLILDWADEISS. The C-terminal stretch occupies residues 538–878; sequence LKVRANAETV…ASAQAKIKHG (341 aa). 7 residues coordinate substrate: arginine 565, arginine 621, glutamate 749, glycine 770, threonine 771, asparagine 772, and aspartate 773. Residue glutamate 749 participates in Mg(2+) binding. Aspartate 773 serves as a coordination point for Mg(2+). Cysteine 835 functions as the Proton donor in the catalytic mechanism.

The protein belongs to the PEP-utilizing enzyme family. Homodimer. The cofactor is Mg(2+). In terms of processing, phosphorylation of Thr-457 in the dark inactivates the enzyme. Dephosphorylation upon light stimulation reactivates the enzyme.

The enzyme catalyses pyruvate + phosphate + ATP = phosphoenolpyruvate + AMP + diphosphate + H(+). Activated by light-induced dephosphorylation. Inhibited by dark-induced phosphorylation. Both reactions are catalyzed by PDRP1. Its function is as follows. Catalyzes the reversible phosphorylation of pyruvate and phosphate. The protein is Pyruvate, phosphate dikinase (ppdK) of Rickettsia felis (strain ATCC VR-1525 / URRWXCal2) (Rickettsia azadi).